We begin with the raw amino-acid sequence, 258 residues long: 4-oxalmesaconate hydratase (258 aa).

Zn(2+) contacts are provided by His28, Asp31, and His141.

This sequence belongs to the MshB deacetylase family. It depends on Zn(2+) as a cofactor.

It catalyses the reaction 2-hydroxy-4-oxobutane-1,2,4-tricarboxylate = 4-carboxy-2-hydroxy-cis,cis-muconate + H2O. In terms of biological role, catalyzes the conversion of oxalomesaconic acid enol (OMAenol) to 4-carboxy-4-hydroxy-2-oxoadipic acid (CHA). Mediates the third step of gallate degradation pathway. The polypeptide is 4-oxalmesaconate hydratase (galB) (Pseudomonas putida (strain ATCC 47054 / DSM 6125 / CFBP 8728 / NCIMB 11950 / KT2440)).